Consider the following 224-residue polypeptide: Myogenin (224 aa).

Ser-77 and Ser-79 each carry phosphoserine; by CaMK2G. The 52-residue stretch at 81–132 (DRRRAATLREKRRLKKVNEAFEALKRSTLLNPNQRLPKVEILRSAIQYIERL) folds into the bHLH domain. Phosphothreonine; by CaMK2G is present on Thr-87.

In terms of assembly, homodimer and heterodimer with E12; heterodimerization enhances MYOG DNA-binding and transcriptional activities. Interacts with SMARCA4/BRG1/BAF190A. Interacts (via C-terminal region) with SSRP1 and SUPT16H; the interaction is indicative of an interaction with the FACT complex. nteracts with CSRP3. Post-translationally, phosphorylated by CAMK2G on threonine and serine amino acids in a muscle activity-dependent manner. Phosphorylation of Thr-87 impairs both DNA-binding and trans-activation functions in contracting muscles. As to expression, expressed in myoblast cells. Expressed weakly in myotubes (at protein level). Expressed strongly in denervated muscles and in satellite cells isolated from denervated muscles. Expressed weakly in innervated muscle and in satellite cells isolated from innervated muscles.

Its subcellular location is the nucleus. In terms of biological role, acts as a transcriptional activator that promotes transcription of muscle-specific target genes and plays a role in muscle differentiation, cell cycle exit and muscle atrophy. Essential for the development of functional embryonic skeletal fiber muscle differentiation. However is dispensable for postnatal skeletal muscle growth; phosphorylation by CAMK2G inhibits its transcriptional activity in respons to muscle activity. Required for the recruitment of the FACT complex to muscle-specific promoter regions, thus promoting gene expression initiation. During terminal myoblast differentiation, plays a role as a strong activator of transcription at loci with an open chromatin structure previously initiated by MYOD1. Together with MYF5 and MYOD1, co-occupies muscle-specific gene promoter core regions during myogenesis. Also cooperates with myocyte-specific enhancer factor MEF2D and BRG1-dependent recruitment of SWI/SNF chromatin-remodeling enzymes to alter chromatin structure at myogenic late gene promoters. Facilitates cell cycle exit during terminal muscle differentiation through the up-regulation of miR-20a expression, which in turn represses genes involved in cell cycle progression. Binds to the E-box containing (E1) promoter region of the miR-20a gene. Also plays a role in preventing reversal of muscle cell differentiation. Contributes to the atrophy-related gene expression in adult denervated muscles. Induces fibroblasts to differentiate into myoblasts. In Mus musculus (Mouse), this protein is Myogenin (Myog).